Here is a 192-residue protein sequence, read N- to C-terminus: Thioredoxin-like 3-2, chloroplastic (192 aa).

A chloroplast-targeting transit peptide spans 1-55 (MSEIVNLSSSLRSLNPKISPLVPPYRQTSSSFSRPRNFKYHSFTDKICLAAERIR). A Thioredoxin domain is found at 66–191 (LQELDDSPVS…VREMIENDSI (126 aa)). Residues C110 and C113 each act as nucleophile in the active site. A disulfide bridge connects residues C110 and C113.

It belongs to the thioredoxin family.

Its subcellular location is the plastid. It localises to the chloroplast stroma. Its function is as follows. Probable thiol-disulfide oxidoreductase that may participate in various redox reactions. The chain is Thioredoxin-like 3-2, chloroplastic (WCRKC2) from Arabidopsis thaliana (Mouse-ear cress).